Reading from the N-terminus, the 98-residue chain is Cystatin-B (98 aa).

An N-acetylmethionine modification is found at Met-1. The Secondary area of contact signature appears at 46-50 (QVVAG).

It belongs to the cystatin family. As to quaternary structure, able to form dimers stabilized by noncovalent forces.

The protein localises to the cytoplasm. The protein resides in the nucleus. This is an intracellular thiol proteinase inhibitor. Tightly binding reversible inhibitor of cathepsins L, H and B. This chain is Cystatin-B (CSTB), found in Pan troglodytes (Chimpanzee).